Consider the following 187-residue polypeptide: Ion-translocating oxidoreductase complex subunit B (187 aa).

The segment at 1–26 (MTHILFAVLVLALLALAFGIILGFAA) is hydrophobic. The 4Fe-4S domain occupies 32–90 (EADPIVDQLDALLPQTQCGQCGYPGCKPYAEALANGDQINKCVPGGDATMRKIADLMGV). Cys49, Cys52, Cys57, Cys73, Cys115, Cys118, Cys121, Cys125, Cys145, Cys148, Cys151, and Cys155 together coordinate [4Fe-4S] cluster. 2 consecutive 4Fe-4S ferredoxin-type domains span residues 106-135 (KVAF…GATK) and 136-165 (AMHT…MIPV).

Belongs to the 4Fe4S bacterial-type ferredoxin family. RnfB subfamily. As to quaternary structure, the complex is composed of six subunits: RnfA, RnfB, RnfC, RnfD, RnfE and RnfG. Requires [4Fe-4S] cluster as cofactor.

The protein resides in the cell inner membrane. Its function is as follows. Part of a membrane-bound complex that couples electron transfer with translocation of ions across the membrane. The protein is Ion-translocating oxidoreductase complex subunit B of Aeromonas hydrophila subsp. hydrophila (strain ATCC 7966 / DSM 30187 / BCRC 13018 / CCUG 14551 / JCM 1027 / KCTC 2358 / NCIMB 9240 / NCTC 8049).